Here is a 341-residue protein sequence, read N- to C-terminus: Inositol monophosphatase 3 (341 aa).

A helical transmembrane segment spans residues 11 to 31; the sequence is LGIAVFCLLGVGVIYHLYAGV. Mg(2+) contacts are provided by E117, D157, L159, D160, and D283. E117 serves as a coordination point for substrate. Substrate-binding positions include 159–162 and D283; that span reads LDAT.

Belongs to the inositol monophosphatase superfamily. Mg(2+) serves as cofactor.

It is found in the membrane. It carries out the reaction a myo-inositol phosphate + H2O = myo-inositol + phosphate. It participates in polyol metabolism; myo-inositol biosynthesis; myo-inositol from D-glucose 6-phosphate: step 2/2. The sequence is that of Inositol monophosphatase 3 (bpnt2) from Danio rerio (Zebrafish).